The sequence spans 24 residues: Brevinin-1BYc (24 aa).

The cysteines at positions 18 and 24 are disulfide-linked.

Expressed by the skin glands.

The protein resides in the secreted. Antibacterial activity against Gram-positive bacterium S.aureus. Weak antifungal activity against C.albicans. In Rana boylii (Foothill yellow-legged frog), this protein is Brevinin-1BYc.